Here is a 528-residue protein sequence, read N- to C-terminus: O-methylsterigmatocystin oxidoreductase (528 aa).

Heme is bound at residue C440.

The protein belongs to the cytochrome P450 family. The cofactor is heme.

The enzyme catalyses 8-O-methylsterigmatocystin + 2 reduced [NADPH--hemoprotein reductase] + 2 O2 = aflatoxin B1 + methanol + 2 oxidized [NADPH--hemoprotein reductase] + CO2 + H2O + 2 H(+). It carries out the reaction 8-O-methyldihydrosterigmatocystin + 2 reduced [NADPH--hemoprotein reductase] + 2 O2 = aflatoxin B2 + methanol + 2 oxidized [NADPH--hemoprotein reductase] + CO2 + H2O + 2 H(+). The protein operates within mycotoxin biosynthesis; aflatoxin biosynthesis. In terms of biological role, converts O-methylsterigmatocystin (OMST) to aflatoxin B1 and converts dihydro-O-methylsterigmatocystin (DHOMST) to aflatoxin B2 in the aflatoxin biosynthesis pathway. This Aspergillus flavus protein is O-methylsterigmatocystin oxidoreductase (ordA).